We begin with the raw amino-acid sequence, 245 residues long: Chymotrypsin B (245 aa).

5 disulfide bridges follow: Cys-1/Cys-121, Cys-42/Cys-58, Cys-135/Cys-201, Cys-167/Cys-182, and Cys-191/Cys-220. Residues 14 to 15 constitute a propeptide that is removed on maturation; sequence AR. Positions 16–243 constitute a Peptidase S1 domain; the sequence is IVNGEEAVPH…LRGWVDQILA (228 aa). Catalysis depends on charge relay system residues His-57 and Asp-101. Ser-195 (charge relay system) is an active-site residue.

The protein belongs to the peptidase S1 family.

It is found in the secreted. It localises to the extracellular space. The catalysed reaction is Preferential cleavage: Tyr-|-Xaa, Trp-|-Xaa, Phe-|-Xaa, Leu-|-Xaa.. The polypeptide is Chymotrypsin B (Gadus morhua (Atlantic cod)).